A 365-amino-acid polypeptide reads, in one-letter code: MFEINPVKNKIIDLSDRTSVLRGYLDFDAKVERLEEVNGELEQPDVWNDPDKAQALGKERVSLEQVVNTIKNLEQGLEDVDGLLELAIEAEDEDTFNEAVAELDELEQQLEKLEFRRMFSGEHDACDCYVDLQAGSGGTEAQDWTEMLLRMYLRWAESKGFKTELMEVSDGDVAGLKSATIKVSGEYAFGWLRTETGIHRLVRKSPFDSNNRRHTSFSAAFVYPEIDDDIDIEINPADLRIDVYRASGAGGQHVNKTESAVRITHMPSGIVVQCQNDRSQHKNKDQAMKQLKAKLYELELQKKNADKQAMEDNKSDIGWGSQIRSYVLDDSRIKDLRTGVENRNTQAVLDGDLDRFIEASLKAGL.

Gln252 is subject to N5-methylglutamine.

It belongs to the prokaryotic/mitochondrial release factor family. Methylated by PrmC. Methylation increases the termination efficiency of RF2.

The protein localises to the cytoplasm. Peptide chain release factor 2 directs the termination of translation in response to the peptide chain termination codons UGA and UAA. This chain is Peptide chain release factor 2 (prfB), found in Haemophilus influenzae (strain ATCC 51907 / DSM 11121 / KW20 / Rd).